The chain runs to 352 residues: MLELNFSQTLGNHCLTINETLPANGITAIFGVSGAGKTSLINAISGLTRPQKGRIVLNGRVLNDAEKGICLTPEKRRVGYVFQDARLFPHYKVRGNLRYGMSKSMVDQFDKLVALLGIEPLLDRLPGSLSGGEKQRVAIGRALLTAPELLLLDEPLASLDIPRKRELLPYLQRLTREINIPMLYVSHSLDEILHLADRVMVLENGQVKAFGALEEVWGSSVMNPWLPKEQQSSILKVTVLEHHPHYAMTALALGDQHLWVNKLGEPLQAALRIRIQASDVSLVLQPPQQTSIRNVLRAKVVNSYDDNGQVEVELEVGGKTLWARISPWARDELAIKPGLWLYAQIKSVSITA.

The ABC transporter domain maps to 1 to 229 (MLELNFSQTL…SVMNPWLPKE (229 aa)). 31 to 38 (GVSGAGKT) serves as a coordination point for ATP. In terms of domain architecture, Mop spans 289–352 (QTSIRNVLRA…AQIKSVSITA (64 aa)).

Belongs to the ABC transporter superfamily. Molybdate importer (TC 3.A.1.8) family. As to quaternary structure, the complex is composed of two ATP-binding proteins (ModC), two transmembrane proteins (ModB) and a solute-binding protein (ModA).

It is found in the cell inner membrane. The enzyme catalyses molybdate(out) + ATP + H2O = molybdate(in) + ADP + phosphate + H(+). Its function is as follows. Part of the ABC transporter complex ModABC involved in molybdenum import. Responsible for energy coupling to the transport system. The protein is Molybdenum import ATP-binding protein ModC of Shigella flexneri.